We begin with the raw amino-acid sequence, 313 residues long: Ribosomal RNA small subunit methyltransferase H (313 aa).

S-adenosyl-L-methionine-binding positions include 33–35 (AGH), E52, F80, D101, and Q108.

It belongs to the methyltransferase superfamily. RsmH family.

It localises to the cytoplasm. It catalyses the reaction cytidine(1402) in 16S rRNA + S-adenosyl-L-methionine = N(4)-methylcytidine(1402) in 16S rRNA + S-adenosyl-L-homocysteine + H(+). Specifically methylates the N4 position of cytidine in position 1402 (C1402) of 16S rRNA. In Spiroplasma kunkelii, this protein is Ribosomal RNA small subunit methyltransferase H.